Reading from the N-terminus, the 1377-residue chain is Carboxypeptidase D (1377 aa).

Positions 1 to 37 (MASGRDERPPWRLGRLRLLPPPPLLLLLLLLRSSAQA) are cleaved as a signal peptide. Topologically, residues 38–1296 (AHIKKAEATT…DNRIFGLPRE (1259 aa)) are extracellular. The 318-residue stretch at 62 to 379 (HYYHEAALGE…ESLITLIEKV (318 aa)) folds into the Peptidase M14 1 domain. Residues histidine 138 and glutamate 141 each coordinate Zn(2+). Residues 161–163 (RGD) carry the Cell attachment site motif. N-linked (GlcNAc...) asparagine glycosylation is found at asparagine 171 and asparagine 216. Residues 188 to 231 (RAREGDCGLGDSGPPGTSGRDNSRGRDLNRSFPDQFSTGEPPSL) are disordered. Histidine 256 provides a ligand contact to Zn(2+). Position 264 is a phosphotyrosine (tyrosine 264). Serine 269 carries the phosphoserine modification. The active-site Proton donor/acceptor is the glutamate 349. N-linked (GlcNAc...) asparagine glycans are attached at residues asparagine 398, asparagine 409, asparagine 428, and asparagine 521. The Peptidase M14 2 domain occupies 501–791 (HHHHFPDMEI…RSLIQFMKQV (291 aa)). Residues histidine 563 and glutamate 566 each contribute to the Zn(2+) site. Asparagine 625 carries N-linked (GlcNAc...) asparagine glycosylation. Histidine 670 contacts Zn(2+). Glutamate 761 functions as the Proton donor/acceptor in the catalytic mechanism. Asparagine 810, asparagine 854, asparagine 866, asparagine 878, asparagine 952, and asparagine 975 each carry an N-linked (GlcNAc...) asparagine glycan. Residues 874–898 (ADANNESKKGRGHSTSTDDTSDPTS) are disordered. The region spanning 929–1208 (RYHSYKDLSE…KSLLSMLVEV (280 aa)) is the Peptidase M14 3 domain. A compositionally biased stretch (basic and acidic residues) spans 1038–1047 (RERAQEKDCT). The interval 1038 to 1064 (RERAQEKDCTSKTGHTNAHGKDLDTDF) is disordered. Residues asparagine 1067 and asparagine 1139 are each glycosylated (N-linked (GlcNAc...) asparagine). Residues 1297–1317 (LVVTVSGATMSALILTACIIW) traverse the membrane as a helical segment. 3 S-palmitoyl cysteine lipidation sites follow: cysteine 1314, cysteine 1318, and cysteine 1320. Over 1318–1377 (CICSIKSNRHKDGFHRLRQHHDEYEDEIRMMSTGSKKSLLSHEFQDETDTEEETLYSSKH) the chain is Cytoplasmic. Phosphoserine occurs at positions 1355 and 1358. Residues 1356-1377 (LLSHEFQDETDTEEETLYSSKH) form a disordered region. A phosphothreonine mark is found at threonine 1365 and threonine 1367.

Belongs to the peptidase M14 family. It depends on Zn(2+) as a cofactor.

It is found in the cell membrane. The catalysed reaction is Releases C-terminal Arg and Lys from polypeptides.. The sequence is that of Carboxypeptidase D (Cpd) from Mus musculus (Mouse).